Reading from the N-terminus, the 459-residue chain is Cysteine--tRNA ligase (459 aa).

Cys28 contributes to the Zn(2+) binding site. Positions Ile30–His40 match the 'HIGH' region motif. The Zn(2+) site is built by Cys209, His234, and Glu238. The 'KMSKS' region motif lies at Lys266–Ser270. Lys269 provides a ligand contact to ATP.

The protein belongs to the class-I aminoacyl-tRNA synthetase family. As to quaternary structure, monomer. The cofactor is Zn(2+).

It localises to the cytoplasm. It carries out the reaction tRNA(Cys) + L-cysteine + ATP = L-cysteinyl-tRNA(Cys) + AMP + diphosphate. The polypeptide is Cysteine--tRNA ligase (Shewanella sediminis (strain HAW-EB3)).